A 92-amino-acid chain; its full sequence is Small ribosomal subunit protein uS19c (92 aa).

It belongs to the universal ribosomal protein uS19 family.

It localises to the plastid. The protein resides in the chloroplast. In terms of biological role, protein S19 forms a complex with S13 that binds strongly to the 16S ribosomal RNA. In Fagopyrum esculentum subsp. ancestrale (Wild buckwheat), this protein is Small ribosomal subunit protein uS19c.